Consider the following 125-residue polypeptide: uncharacterized protein (125 aa).

The 66-residue stretch at 45-110 (IVPVGSKTLL…IGNVPLKILC (66 aa)) folds into the Cupin type-2 domain.

This is an uncharacterized protein from Methanocaldococcus jannaschii (strain ATCC 43067 / DSM 2661 / JAL-1 / JCM 10045 / NBRC 100440) (Methanococcus jannaschii).